Reading from the N-terminus, the 216-residue chain is MSTAQRRLPVYKKILEENKKKWMIKEFLEYRLAKYGYIDSEILKTPLGTRIVIYAERPSRIIGRKGAIVKEVSSILANKLGVENPQIDVIDVSKIEAPELFPKVVAYRIANAMARGVRFRRVMFVAVRQLMEAGAKGFEIVVSGKLSTERAKFEKITYGKLYKIGYDAKNRVRRAVVHVLLKPGIYGIEVRITPATLRYSDEYKIKPPTRPEAAAQ.

One can recognise a KH type-2 domain in the interval 24-93 (IKEFLEYRLA…NPQIDVIDVS (70 aa)).

Belongs to the universal ribosomal protein uS3 family. As to quaternary structure, part of the 30S ribosomal subunit.

Functionally, binds the lower part of the 30S subunit head. This is Small ribosomal subunit protein uS3 from Pyrobaculum calidifontis (strain DSM 21063 / JCM 11548 / VA1).